The chain runs to 176 residues: Cytochrome b (176 aa).

Transmembrane regions (helical) follow at residues 33–53 (FGSL…FLAM), 77–98 (WLLR…YLHI), and 113–133 (WNVG…GYVL). Residues His-83 and His-97 each coordinate heme b.

The protein belongs to the cytochrome b family. The cytochrome bc1 complex contains 11 subunits: 3 respiratory subunits (MT-CYB, CYC1 and UQCRFS1), 2 core proteins (UQCRC1 and UQCRC2) and 6 low-molecular weight proteins (UQCRH/QCR6, UQCRB/QCR7, UQCRQ/QCR8, UQCR10/QCR9, UQCR11/QCR10 and a cleavage product of UQCRFS1). This cytochrome bc1 complex then forms a dimer. Heme b is required as a cofactor.

It localises to the mitochondrion inner membrane. Component of the ubiquinol-cytochrome c reductase complex (complex III or cytochrome b-c1 complex) that is part of the mitochondrial respiratory chain. The b-c1 complex mediates electron transfer from ubiquinol to cytochrome c. Contributes to the generation of a proton gradient across the mitochondrial membrane that is then used for ATP synthesis. In Eumops glaucinus (Wagner's mastiff bat), this protein is Cytochrome b (MT-CYB).